A 308-amino-acid chain; its full sequence is ADP,ATP carrier protein (308 aa).

Solcar repeat units lie at residues 6–99 (KNFM…FKRM), 110–203 (KWFA…LKPV), and 211–297 (NNFL…LQVI). 5 helical membrane-spanning segments follow: residues 8–35 (FMVDFLAGGLSAAVSKTAAAPIERVKLL), 76–100 (TANVIRYFPTQALNFAFKDKFKRMF), 108–128 (YWKWFAGNMASGGAAGAVSLS), 179–200 (FNISCVGIVVYRGLYFGMYDSL), and 214–234 (LAAFLLGWGITIGAGLASYPI). ADP-binding residues include arginine 81 and lysine 93. Residue arginine 238 participates in ADP binding. The tract at residues 238–243 (RRRMMM) is important for transport activity. Residues 238–243 (RRRMMM) carry the Nucleotide carrier signature motif motif. Residues 274–294 (AGANILRAVAGAGVLAGYDQL) form a helical membrane-spanning segment.

Belongs to the mitochondrial carrier (TC 2.A.29) family. Monomer.

It is found in the mitochondrion inner membrane. It carries out the reaction ADP(in) + ATP(out) = ADP(out) + ATP(in). Its activity is regulated as follows. The matrix-open state (m-state) is inhibited by the membrane-permeable bongkrekic acid (BKA). The cytoplasmic-open state (c-state) is inhibited by the membrane-impermeable toxic inhibitor carboxyatractyloside (CATR). Functionally, ADP:ATP antiporter that mediates import of ADP into the mitochondrial matrix for ATP synthesis, and export of ATP out to fuel the cell. Cycles between the cytoplasmic-open state (c-state) and the matrix-open state (m-state): operates by the alternating access mechanism with a single substrate-binding site intermittently exposed to either the cytosolic (c-state) or matrix (m-state) side of the inner mitochondrial membrane. The polypeptide is ADP,ATP carrier protein (ABT) (Chlamydomonas reinhardtii (Chlamydomonas smithii)).